Here is a 487-residue protein sequence, read N- to C-terminus: 3-octaprenyl-4-hydroxybenzoate carboxy-lyase (487 aa).

Position 172 (Asn172) interacts with Mn(2+). Prenylated FMN is bound by residues 175 to 177, 189 to 191, and 194 to 195; these read IYR, RWL, and RG. A Mn(2+)-binding site is contributed by Glu238. The active-site Proton donor is the Asp287.

This sequence belongs to the UbiD family. In terms of assembly, homohexamer. The cofactor is prenylated FMN. It depends on Mn(2+) as a cofactor.

Its subcellular location is the cell membrane. It catalyses the reaction a 4-hydroxy-3-(all-trans-polyprenyl)benzoate + H(+) = a 2-(all-trans-polyprenyl)phenol + CO2. Its pathway is cofactor biosynthesis; ubiquinone biosynthesis. Catalyzes the decarboxylation of 3-octaprenyl-4-hydroxy benzoate to 2-octaprenylphenol, an intermediate step in ubiquinone biosynthesis. This chain is 3-octaprenyl-4-hydroxybenzoate carboxy-lyase, found in Actinobacillus pleuropneumoniae serotype 3 (strain JL03).